We begin with the raw amino-acid sequence, 376 residues long: Glutamate 5-kinase (376 aa).

Lys-15 lines the ATP pocket. Residues Ser-55, Asp-141, and Asn-153 each contribute to the substrate site. ATP-binding positions include 173–174 and 215–221; these read SD and TGGMQTK. The region spanning 280 to 361 is the PUA domain; it reads AGRLTVDAGA…HAIAEVLDEA (82 aa).

Belongs to the glutamate 5-kinase family.

The protein resides in the cytoplasm. The catalysed reaction is L-glutamate + ATP = L-glutamyl 5-phosphate + ADP. It participates in amino-acid biosynthesis; L-proline biosynthesis; L-glutamate 5-semialdehyde from L-glutamate: step 1/2. In terms of biological role, catalyzes the transfer of a phosphate group to glutamate to form L-glutamate 5-phosphate. The protein is Glutamate 5-kinase of Salinibacter ruber (strain DSM 13855 / M31).